The following is a 168-amino-acid chain: Peptide deformylase 2 (168 aa).

Fe cation is bound by residues Cys91 and His133. The active site involves Glu134. His137 provides a ligand contact to Fe cation.

This sequence belongs to the polypeptide deformylase family. Fe(2+) serves as cofactor.

The catalysed reaction is N-terminal N-formyl-L-methionyl-[peptide] + H2O = N-terminal L-methionyl-[peptide] + formate. In terms of biological role, removes the formyl group from the N-terminal Met of newly synthesized proteins. Requires at least a dipeptide for an efficient rate of reaction. N-terminal L-methionine is a prerequisite for activity but the enzyme has broad specificity at other positions. This is Peptide deformylase 2 from Vibrio cholerae serotype O1 (strain ATCC 39315 / El Tor Inaba N16961).